Consider the following 299-residue polypeptide: Kynurenine formamidase-like hydrolase fscH (299 aa).

The short motif at 48–52 (HGGAW) is the HGGXW element. The disordered stretch occupies residues 90-110 (SPRTPSQPVPSGGHVGGEQQA). The active-site Nucleophile is S142.

It belongs to the kynurenine formamidase family.

It participates in secondary metabolite biosynthesis. Its function is as follows. Kynurenine formamidase-like hydrolase; part of the fragmented gene cluster that mediates the biosynthesis of fusarochromene, a tryptophan-derived metabolite closely related to a group of mycotoxins including fusarochromanone. Within the pathway, fscH converts the product of fscD into 4-hydroxykyrunenine. The first step of the pathway is the epimerization of L-tryptophan to D-tryptophan in the presence of the NRPS-like tryptophan epimerase fscC. D-tryptophan is subsequently hydroxylated by the tryptophan 6-hydroxylase fscE to yield 6-hydroxytryptophan. The pyrrole ring undergoes cleavaged by the tryptophan 2,3-dioxygenase fscD and is finally converted to 4-hydroxykyrunenine by the hydrolase fscH. The NRPS-like oxidoreductase fscA reduces the carboxyl group to primary alcohol and the DMATS-type prenyltransferase fscG performs prenylation, followed by the formation of a chromene ring catalyzed by the oxidoreductase fscI, which leads to desacetylfusarochromene. Epoxidation by fscF and rearrangement reactions of chromene double bonds convert compound desacetylfusarochromene to fusarochromanones. Although specific acetyltransferases were not found near the fsc gene cluster, several predicted enzymes containing the N-acetyltransferase superfamily domain are present in the genome of F.equiseti. These predicted enzymes may have the potential to convert desacetylfusarochromene to fusarochromene. This Fusarium equiseti (Fusarium scirpi) protein is Kynurenine formamidase-like hydrolase fscH.